We begin with the raw amino-acid sequence, 513 residues long: MAEVGGTIPRSNRELQRCVLLTTTIMSIPGVNASFSSTPERLNSPVTIPAVMFIFGVVGNLVAIVVLCKSRKEQKETTFYTLVCGLAVTDLLGTLLVSPVTIATYMKGQWPGDQALCDYSTFILLFFGLSGLSIICAMSIERYLAINHAYFYSHYVDKRLAGLTLFAIYASNVLFCALPNMGLGRSERQYPGTWCFIDWTTNVTAYAAFSYMYAGFSSFLILATVLCNVLVCGALLRMHRQFMRRTSLGTEQHHAAAAAAVASVACRGHAGASPALQRLSDFRRRRSFRRIAGAEIQMVILLIATSLVVLICSIPLVVRVFINQLYQPNVVKDISRNPDLQAIRIASVNPILDPWIYILLRKTVLSKAIEKIKCLFCRIGGSGRDSSAQHCSESRRTSSAMSGHSRSFLARELKEISSTSQTLLYLPDLTESSLGGRNLLPGSHGMGLTQADTTSLRTLRISETSDSSQGQDSESVLLVDEVSGSHREEPASKGNSLQVTFPSETLKLSEKCI.

At 1 to 44 (MAEVGGTIPRSNRELQRCVLLTTTIMSIPGVNASFSSTPERLNS) the chain is on the extracellular side. Asn32 carries an N-linked (GlcNAc...) asparagine glycan. Residues 45–68 (PVTIPAVMFIFGVVGNLVAIVVLC) traverse the membrane as a helical segment. At 69 to 80 (KSRKEQKETTFY) the chain is on the cytoplasmic side. A helical transmembrane segment spans residues 81 to 104 (TLVCGLAVTDLLGTLLVSPVTIAT). The Extracellular segment spans residues 105–121 (YMKGQWPGDQALCDYST). Cys117 and Cys195 are disulfide-bonded. The helical transmembrane segment at 122-140 (FILLFFGLSGLSIICAMSI) threads the bilayer. Residues 141 to 160 (ERYLAINHAYFYSHYVDKRL) lie on the Cytoplasmic side of the membrane. Residues 161–185 (AGLTLFAIYASNVLFCALPNMGLGR) form a helical membrane-spanning segment. Topologically, residues 186 to 209 (SERQYPGTWCFIDWTTNVTAYAAF) are extracellular. The helical transmembrane segment at 210–236 (SYMYAGFSSFLILATVLCNVLVCGALL) threads the bilayer. The Cytoplasmic portion of the chain corresponds to 237–295 (RMHRQFMRRTSLGTEQHHAAAAAAVASVACRGHAGASPALQRLSDFRRRRSFRRIAGAE). Residues 296–323 (IQMVILLIATSLVVLICSIPLVVRVFIN) traverse the membrane as a helical segment. At 324–340 (QLYQPNVVKDISRNPDL) the chain is on the extracellular side. Residues 341-360 (QAIRIASVNPILDPWIYILL) form a helical membrane-spanning segment. Over 361-513 (RKTVLSKAIE…ETLKLSEKCI (153 aa)) the chain is Cytoplasmic. The disordered stretch occupies residues 383–403 (GRDSSAQHCSESRRTSSAMSG). Polar residues predominate over residues 384 to 403 (RDSSAQHCSESRRTSSAMSG). A phosphoserine mark is found at Ser402, Ser405, and Ser407.

This sequence belongs to the G-protein coupled receptor 1 family. In terms of assembly, interacts with FEM1A. In terms of processing, phosphorylation mediates agonist-mediated desensitization by promoting cytoplasmic retention. In terms of tissue distribution, abundant expression in ileum, thymus and mastocytoma P-815 cells. Also observed in lung, spleen, heart and uterus.

Its subcellular location is the cell membrane. Receptor for prostaglandin E2 (PGE2). The activity of this receptor is mediated by G(s) proteins that stimulate adenylate cyclase. Has a relaxing effect on smooth muscle. May play an important role in regulating renal hemodynamics, intestinal epithelial transport, adrenal aldosterone secretion, and uterine function. This chain is Prostaglandin E2 receptor EP4 subtype (Ptger4), found in Mus musculus (Mouse).